Reading from the N-terminus, the 508-residue chain is Asparagine--tRNA ligase (508 aa).

This sequence belongs to the class-II aminoacyl-tRNA synthetase family. Homodimer.

It is found in the cytoplasm. It carries out the reaction tRNA(Asn) + L-asparagine + ATP = L-asparaginyl-tRNA(Asn) + AMP + diphosphate + H(+). The polypeptide is Asparagine--tRNA ligase (Streptococcus suis (strain 05ZYH33)).